The following is a 162-amino-acid chain: EF-hand calcium-binding domain-containing protein 11 (162 aa).

EF-hand domains are found at residues 18 to 53, 91 to 126, and 127 to 162; these read SERR…LFGY, LYRN…VAPK, and LPSR…GKAK. The Ca(2+) site is built by Asp-140, Asp-142, Asp-144, His-146, and Asp-151.

The chain is EF-hand calcium-binding domain-containing protein 11 (Efcab11) from Rattus norvegicus (Rat).